The chain runs to 64 residues: UPF0337 protein SAR0874 (64 aa).

The interval 1-40 (MADESKFEQAKGNVKETVGNVTDNKNLENEGKEDKASGKA) is disordered. The segment covering 25–40 (KNLENEGKEDKASGKA) has biased composition (basic and acidic residues).

The protein belongs to the UPF0337 (CsbD) family.

The polypeptide is UPF0337 protein SAR0874 (Staphylococcus aureus (strain MRSA252)).